Here is a 434-residue protein sequence, read N- to C-terminus: Cullin-like protein 5 (434 aa).

A disordered region spans residues 1–34 (MKRSISPDPFSSTKSPKLVHHSPDDGGAEGNPYR).

This sequence belongs to the cullin family.

This is Cullin-like protein 5 from Arabidopsis thaliana (Mouse-ear cress).